The primary structure comprises 450 residues: Tubulin alpha chain (450 aa).

A GTP-binding site is contributed by glutamine 11. Position 40 is an N6-acetyllysine (lysine 40). Positions 71, 140, 144, 145, 179, 206, and 228 each coordinate GTP. Glutamate 71 is a Mg(2+) binding site. Glutamate 254 is an active-site residue.

The protein belongs to the tubulin family. In terms of assembly, dimer of alpha and beta chains. A typical microtubule is a hollow water-filled tube with an outer diameter of 25 nm and an inner diameter of 15 nM. Alpha-beta heterodimers associate head-to-tail to form protofilaments running lengthwise along the microtubule wall with the beta-tubulin subunit facing the microtubule plus end conferring a structural polarity. Microtubules usually have 13 protofilaments but different protofilament numbers can be found in some organisms and specialized cells. The cofactor is Mg(2+). Undergoes a tyrosination/detyrosination cycle, the cyclic removal and re-addition of a C-terminal tyrosine residue by the enzymes tubulin tyrosine carboxypeptidase (TTCP) and tubulin tyrosine ligase (TTL), respectively. In terms of processing, acetylation of alpha chains at Lys-40 stabilizes microtubules and affects affinity and processivity of microtubule motors. This modification has a role in multiple cellular functions, ranging from cell motility, cell cycle progression or cell differentiation to intracellular trafficking and signaling.

It localises to the cytoplasm. It is found in the cytoskeleton. The enzyme catalyses GTP + H2O = GDP + phosphate + H(+). Its function is as follows. Tubulin is the major constituent of microtubules, a cylinder consisting of laterally associated linear protofilaments composed of alpha- and beta-tubulin heterodimers. Microtubules grow by the addition of GTP-tubulin dimers to the microtubule end, where a stabilizing cap forms. Below the cap, tubulin dimers are in GDP-bound state, owing to GTPase activity of alpha-tubulin. The protein is Tubulin alpha chain of Haemonchus contortus (Barber pole worm).